A 425-amino-acid polypeptide reads, in one-letter code: GTPase Obg (425 aa).

The Obg domain maps to 1 to 158 (MFVDQVKVYV…RYIVMELKLI (158 aa)). A disordered region spans residues 118–144 (KGGRGGRGNNRFANSSNPAPHISENGE). The OBG-type G domain occupies 159 to 327 (ADVGLVGYPS…LMYAIGDTLA (169 aa)). ATP contacts are provided by residues 165–172 (GYPSVGKS), 190–194 (FTTLT), 211–214 (DLPG), 281–284 (NKME), and 308–310 (SAA). Ser172 and Thr192 together coordinate Mg(2+). Residues 348–425 (RAEKEPDAFE…IGKLEFDFVE (78 aa)) enclose the OCT domain.

This sequence belongs to the TRAFAC class OBG-HflX-like GTPase superfamily. OBG GTPase family. In terms of assembly, monomer. Requires Mg(2+) as cofactor.

The protein localises to the cytoplasm. An essential GTPase which binds GTP, GDP and possibly (p)ppGpp with moderate affinity, with high nucleotide exchange rates and a fairly low GTP hydrolysis rate. Plays a role in control of the cell cycle, stress response, ribosome biogenesis and in those bacteria that undergo differentiation, in morphogenesis control. This chain is GTPase Obg, found in Brevibacillus brevis (strain 47 / JCM 6285 / NBRC 100599).